The primary structure comprises 245 residues: Polyhedrin (245 aa).

It belongs to the polyhedrin family.

Its function is as follows. Major component of the virus occlusion bodies, which are large proteinaceous structures (polyhedra), that protect the virus from the outside environment for extended periods until they are ingested by insect larvae. In Lepidoptera (butterflies and moths), this protein is Polyhedrin.